We begin with the raw amino-acid sequence, 593 residues long: uncharacterized protein (593 aa).

This is an uncharacterized protein from Sinorhizobium fredii (strain NBRC 101917 / NGR234).